Here is a 255-residue protein sequence, read N- to C-terminus: Carboxy-S-adenosyl-L-methionine synthase (255 aa).

Residues Tyr45, 70–72, 124–125, and Asn139 contribute to the S-adenosyl-L-methionine site; these read GCS and DI.

Belongs to the class I-like SAM-binding methyltransferase superfamily. Cx-SAM synthase family. As to quaternary structure, homodimer.

It carries out the reaction prephenate + S-adenosyl-L-methionine = carboxy-S-adenosyl-L-methionine + 3-phenylpyruvate + H2O. Catalyzes the conversion of S-adenosyl-L-methionine (SAM) to carboxy-S-adenosyl-L-methionine (Cx-SAM). This chain is Carboxy-S-adenosyl-L-methionine synthase, found in Hamiltonella defensa subsp. Acyrthosiphon pisum (strain 5AT).